The primary structure comprises 340 residues: N-acetyl-gamma-glutamyl-phosphate reductase (340 aa).

Cys-146 is a catalytic residue.

The protein belongs to the NAGSA dehydrogenase family. Type 1 subfamily.

It localises to the cytoplasm. The enzyme catalyses N-acetyl-L-glutamate 5-semialdehyde + phosphate + NADP(+) = N-acetyl-L-glutamyl 5-phosphate + NADPH + H(+). The protein operates within amino-acid biosynthesis; L-arginine biosynthesis; N(2)-acetyl-L-ornithine from L-glutamate: step 3/4. Its function is as follows. Catalyzes the NADPH-dependent reduction of N-acetyl-5-glutamyl phosphate to yield N-acetyl-L-glutamate 5-semialdehyde. This chain is N-acetyl-gamma-glutamyl-phosphate reductase, found in Rubrobacter xylanophilus (strain DSM 9941 / JCM 11954 / NBRC 16129 / PRD-1).